A 181-amino-acid polypeptide reads, in one-letter code: Peptide deformylase (181 aa).

Positions 99 and 141 each coordinate Fe cation. E142 is a catalytic residue. Residue H145 coordinates Fe cation.

It belongs to the polypeptide deformylase family. Requires Fe(2+) as cofactor.

The enzyme catalyses N-terminal N-formyl-L-methionyl-[peptide] + H2O = N-terminal L-methionyl-[peptide] + formate. Its function is as follows. Removes the formyl group from the N-terminal Met of newly synthesized proteins. Requires at least a dipeptide for an efficient rate of reaction. N-terminal L-methionine is a prerequisite for activity but the enzyme has broad specificity at other positions. The sequence is that of Peptide deformylase from Chlamydia trachomatis serovar A (strain ATCC VR-571B / DSM 19440 / HAR-13).